The primary structure comprises 453 residues: MVQINEIKSNSRDTRTAAHTHIRGLGLNEMGVAKPIDAGFVGQTEAREALGLVVDLIRASKMSGRGILLAGGPGTGKTALALAVSQELGPKVPFCPIVGSEIFSAEVKKTAALMENFRRAIGLRIKETKDIYEGEVTELTPEEAEDPLGGYGKTIRSVVVGLKSYRGTKQLRLDPKIYESIQKERVAVGDVIYIEANTGAVKRVGRSDAYATEFDLETEEYVPLPKGEVHKKKEIVQDVTLHDLDVANARPQGGQDVMSMMGSLMKPKKTEITDKLREEVNKKVQSYIDQGVAELVPGVLFIDEVNMLDVECFTYLNRALESTISPIVILASNRGMCRVRGVDDDVSPHGITTDLLDRLLIVRTLPYSLDEIKTIIQKRAVVEQQQISEDALDALAQHGARTSLRYGLQLLSPAGVLAKSEGRDVVEVKDVEECESLFLDATRSKGRFTDKFL.

71–78 lines the ATP pocket; sequence GGPGTGKT.

It belongs to the RuvB family. As to quaternary structure, may form heterododecamers with RVB2. Component of the SWR1 chromatin remodeling complex, the INO80 chromatin remodeling complex, and of the R2TP complex.

The protein localises to the nucleus. It carries out the reaction ATP + H2O = ADP + phosphate + H(+). In terms of biological role, DNA helicase which participates in several chromatin remodeling complexes, including the SWR1 and the INO80 complexes. The SWR1 complex mediates the ATP-dependent exchange of histone H2A for the H2A variant HZT1 leading to transcriptional regulation of selected genes by chromatin remodeling. The INO80 complex remodels chromatin by shifting nucleosomes and is involved in DNA repair. Also involved in pre-rRNA processing. This Yarrowia lipolytica (strain CLIB 122 / E 150) (Yeast) protein is RuvB-like helicase 1 (RVB1).